The following is a 1075-amino-acid chain: DNA-directed RNA polymerase subunit beta (1075 aa).

This sequence belongs to the RNA polymerase beta chain family. As to quaternary structure, in plastids the minimal PEP RNA polymerase catalytic core is composed of four subunits: alpha, beta, beta', and beta''. When a (nuclear-encoded) sigma factor is associated with the core the holoenzyme is formed, which can initiate transcription.

The protein localises to the plastid. The protein resides in the chloroplast. It catalyses the reaction RNA(n) + a ribonucleoside 5'-triphosphate = RNA(n+1) + diphosphate. DNA-dependent RNA polymerase catalyzes the transcription of DNA into RNA using the four ribonucleoside triphosphates as substrates. The chain is DNA-directed RNA polymerase subunit beta from Zea mays (Maize).